A 295-amino-acid polypeptide reads, in one-letter code: Lipase 2 (295 aa).

The N-terminal stretch at 1–31 (MPKPALRRVMTATVAAVGTLALGLTDATAHA) is a signal peptide. The Nucleophile role is filled by Ser-48. 3 disulfide bridges follow: Cys-65–Cys-89, Cys-138–Cys-152, and Cys-205–Cys-254. Residue His-275 is part of the active site.

Belongs to the 'GDSL' lipolytic enzyme family. Monomer.

It is found in the secreted. It carries out the reaction a triacylglycerol + H2O = a diacylglycerol + a fatty acid + H(+). Its activity is regulated as follows. Strongly inhibited by Ag(+). The cations Ca(2+) and Mg(2+) do not significantly reduce the lipolytic activity of SCO7513, whereas high concentrations of Co(2+) and Cu(2+) partially inhibit it. Is not inhibited by DTT in vitro. Is resistant to PMSF inhibition, except in the presence of Ca(2+). Catalyzes the hydrolysis of fatty acid esters with a preference for long chain fatty acids (C16-C18). The polypeptide is Lipase 2 (Streptomyces coelicolor (strain ATCC BAA-471 / A3(2) / M145)).